We begin with the raw amino-acid sequence, 187 residues long: Ribose 1,5-bisphosphate phosphokinase PhnN (187 aa).

10 to 17 serves as a coordination point for ATP; that stretch reads GPSGSGKD.

It belongs to the ribose 1,5-bisphosphokinase family.

It catalyses the reaction alpha-D-ribose 1,5-bisphosphate + ATP = 5-phospho-alpha-D-ribose 1-diphosphate + ADP. The protein operates within metabolic intermediate biosynthesis; 5-phospho-alpha-D-ribose 1-diphosphate biosynthesis; 5-phospho-alpha-D-ribose 1-diphosphate from D-ribose 5-phosphate (route II): step 3/3. Catalyzes the phosphorylation of ribose 1,5-bisphosphate to 5-phospho-D-ribosyl alpha-1-diphosphate (PRPP). The polypeptide is Ribose 1,5-bisphosphate phosphokinase PhnN (Klebsiella pneumoniae subsp. pneumoniae (strain ATCC 700721 / MGH 78578)).